The sequence spans 220 residues: Charged multivesicular body protein 2a (220 aa).

Coiled coils occupy residues E12–Q53 and E198–R219. The tract at residues K196 to D220 is disordered. The MIT-interacting motif signature appears at A208 to R218. Basic and acidic residues predominate over residues E211–D220.

It belongs to the SNF7 family. Probable core component of the endosomal sorting required for transport complex III (ESCRT-III). ESCRT-III components are thought to multimerize to form a flat lattice on the perimeter membrane of the endosome.

It is found in the late endosome membrane. The protein localises to the cytoplasm. In terms of biological role, probable core component of the endosomal sorting required for transport complex III (ESCRT-III) which is involved in multivesicular bodies (MVBs) formation and sorting of endosomal cargo proteins into MVBs. MVBs contain intraluminal vesicles (ILVs) that are generated by invagination and scission from the limiting membrane of the endosome and mostly are delivered to lysosomes enabling degradation of membrane proteins, such as stimulated growth factor receptors, lysosomal enzymes and lipids. This Xenopus laevis (African clawed frog) protein is Charged multivesicular body protein 2a (chmp2a).